A 312-amino-acid polypeptide reads, in one-letter code: MASIRQAFVKSLRFYDIGYNATDPVFRGIYHEKLKHPDDFDSIISRAKAVGVEKMMITGDNVENSEEALNLATNYECFTSTVGVHPCQAQCFLRHSEGPEDYLVKLEALANKGKASGKVVAFGEFGLDYDRLHYAPADVQKMYFEEQLKVAVRVQLPLFLHSRNAENDFFAILEKYLPELPKKGVVHSFTGSIDEMRRCIEHGLYVGVNGCSLKTEENLEVVRAIPLEKMLLETDAPWCEVRPSHAGHQFLKTKLPFDSCKKERFKEGCMIRGRNEPCNTYIVAEIVAALKDISLEELSEQIWENSINLLSK.

A divalent metal cation is bound by residues E124, H161, H187, and D235.

The protein belongs to the metallo-dependent hydrolases superfamily. TatD-type hydrolase family. A divalent metal cation serves as cofactor.

The protein resides in the cytoplasm. It is found in the nucleus. Functionally, has both endo- and exonuclease activities. Incises double-stranded DNA without obvious specificity via its endonuclease activity and excises the DNA from the 3'-to 5'-end by its exonuclease activity. May have a role in apoptosis. This Schizosaccharomyces pombe (strain 972 / ATCC 24843) (Fission yeast) protein is Deoxyribonuclease Tat-D.